The following is a 405-amino-acid chain: Cytoplasmic 60S subunit biogenesis factor ZNF622 (405 aa).

2 consecutive U1-type zinc fingers follow at residues 4-28 and 67-91; these read YTCITCRVAFKDADIQRAHYKTDWH and TYCTVCSKRFSTFNAYENHLKSKKH. Residues 135–230 form a disordered region; sequence AIRAQPSSSP…GVEEEEEKQA (96 aa). Residues 194 to 228 are compositionally biased toward acidic residues; the sequence is AEEEEDSEEGWEEMDSDEDLGSEEEMEGVEEEEEK.

The protein belongs to the REI1 family. Homo- and heterodimer. Associates with pre-60S ribosomal particles. As to expression, mainly expressed in the ovary. In terms of tissue distribution, mainly expressed in the testis.

The protein resides in the cytoplasm. It localises to the nucleus. Functionally, pre-60S-associated cytoplasmic factor involved in the cytoplasmic maturation of the 60S subunit. In Gallus gallus (Chicken), this protein is Cytoplasmic 60S subunit biogenesis factor ZNF622 (ZNF622).